A 297-amino-acid chain; its full sequence is 4-diphosphocytidyl-2-C-methyl-D-erythritol kinase (297 aa).

The active site involves Lys19. 105–115 provides a ligand contact to ATP; the sequence is PIASGIGGGSA. The active site involves Asp147.

Belongs to the GHMP kinase family. IspE subfamily.

The enzyme catalyses 4-CDP-2-C-methyl-D-erythritol + ATP = 4-CDP-2-C-methyl-D-erythritol 2-phosphate + ADP + H(+). It functions in the pathway isoprenoid biosynthesis; isopentenyl diphosphate biosynthesis via DXP pathway; isopentenyl diphosphate from 1-deoxy-D-xylulose 5-phosphate: step 3/6. Functionally, catalyzes the phosphorylation of the position 2 hydroxy group of 4-diphosphocytidyl-2C-methyl-D-erythritol. The sequence is that of 4-diphosphocytidyl-2-C-methyl-D-erythritol kinase from Rhizobium etli (strain CIAT 652).